The primary structure comprises 101 residues: Small ribosomal subunit protein uS14 (101 aa).

The protein belongs to the universal ribosomal protein uS14 family. Part of the 30S ribosomal subunit. Contacts proteins S3 and S10.

Binds 16S rRNA, required for the assembly of 30S particles and may also be responsible for determining the conformation of the 16S rRNA at the A site. The protein is Small ribosomal subunit protein uS14 of Tropheryma whipplei (strain TW08/27) (Whipple's bacillus).